The primary structure comprises 245 residues: Thiopurine S-methyltransferase (245 aa).

Residue W29 to F40 participates in S-adenosyl-L-methionine binding. F40 is a substrate binding site. K58 carries the post-translational modification N6-acetyllysine. S-adenosyl-L-methionine-binding residues include L69, E90, and R152.

This sequence belongs to the class I-like SAM-binding methyltransferase superfamily. TPMT family. As to quaternary structure, monomer.

Its subcellular location is the cytoplasm. It carries out the reaction S-adenosyl-L-methionine + a thiopurine = S-adenosyl-L-homocysteine + a thiopurine S-methylether.. The protein is Thiopurine S-methyltransferase (TPMT) of Bos taurus (Bovine).